The primary structure comprises 340 residues: Phosphoribosylformylglycinamidine cyclo-ligase (340 aa).

It belongs to the AIR synthase family.

It is found in the cytoplasm. The enzyme catalyses 2-formamido-N(1)-(5-O-phospho-beta-D-ribosyl)acetamidine + ATP = 5-amino-1-(5-phospho-beta-D-ribosyl)imidazole + ADP + phosphate + H(+). It functions in the pathway purine metabolism; IMP biosynthesis via de novo pathway; 5-amino-1-(5-phospho-D-ribosyl)imidazole from N(2)-formyl-N(1)-(5-phospho-D-ribosyl)glycinamide: step 2/2. In Streptococcus agalactiae serotype Ia (strain ATCC 27591 / A909 / CDC SS700), this protein is Phosphoribosylformylglycinamidine cyclo-ligase.